The chain runs to 142 residues: EEEIGCTSGWVPFDGRCYGFFPQELSWRRAESFCQRLGARTHLVSIHNEEEHQAIISMLASSQPYSDSEEQEANGDVWIGLRLSLRRLWEWSDGTKLDYGSWYRDVLPRRRACAALEDTADFASWDVELCSDRKPFICAYRT.

Disulfide bonds link Cys6–Cys17, Cys34–Cys138, and Cys113–Cys130. Residues Phe13–Ala139 enclose the C-type lectin domain. A phosphoserine mark is found at Ser62 and Ser68.

In terms of processing, a minor form with some unmodified Ser-68 and partial phosphorylation of Ser-66 may also occur.

The protein resides in the secreted. The protein localises to the extracellular space. It localises to the extracellular matrix. The sequence is that of Dromaiocalcin-2 from Dromaius novaehollandiae (Emu).